We begin with the raw amino-acid sequence, 1553 residues long: Probable serine/threonine-protein kinase qkgA (1553 aa).

Residues 113-142 are disordered; sequence SSSSSSSSTSSSPSLTSSPSSPISTSPPYH. LRR repeat units follow at residues 287 to 309, 311 to 333, 334 to 356, and 357 to 378; these read NGTF…INMC, QLVE…TELK, FLKN…CNLT, and LLKV…IVEL. The 225-residue stretch at 395–619 folds into the Roc domain; it reads SCETWNKVKL…KRLIHESEKS (225 aa). 3 disordered regions span residues 643–696, 955–1019, and 1048–1090; these read NQGR…QQQQ, ISNS…PSSQ, and NQNG…NNNK. 4 stretches are compositionally biased toward low complexity: residues 648–675, 683–696, 956–1018, and 1059–1090; these read SISN…TSKK, SQQQ…QQQQ, SNST…SPSS, and TTTT…NNNK. Positions 694–893 constitute a COR domain; sequence QQQLQQSIKE…KTYWKDGVLL (200 aa). Positions 1242–1546 constitute a Protein kinase domain; sequence ILYERQIGEG…QTSYFDSPFL (305 aa). ATP-binding positions include 1248–1256 and Lys-1271; that span reads IGEGGFGLI. Catalysis depends on Asp-1393, which acts as the Proton acceptor.

It belongs to the protein kinase superfamily. TKL Ser/Thr protein kinase family. ROCO subfamily.

It catalyses the reaction L-seryl-[protein] + ATP = O-phospho-L-seryl-[protein] + ADP + H(+). The catalysed reaction is L-threonyl-[protein] + ATP = O-phospho-L-threonyl-[protein] + ADP + H(+). Involved in growth, and during development, in aggregation. The chain is Probable serine/threonine-protein kinase qkgA (qkgA-1) from Dictyostelium discoideum (Social amoeba).